The following is a 353-amino-acid chain: Hydrazine synthase subunit gamma (353 aa).

An N-terminal signal peptide occupies residues 1 to 39 (MAREMRLGGKERMKTGVVKIGLVAALGVVGLISAGGVYA). Cys102, Cys105, and His106 together coordinate heme c. Positions 118, 119, 122, 123, 126, 129, 139, and 141 each coordinate Ca(2+). The heme c site is built by Cys165, Cys225, Cys228, and His229. Positions 209 to 353 (EAQKRGQKIF…QDLVEYLKAL (145 aa)) constitute a Cytochrome c domain. The Ca(2+) site is built by Asp296, Ser306, Gly307, and Thr308. Residue His332 participates in heme c binding.

Part of the hydrazine synthase complex that forms an elongated dimer of heterotrimers composed of one alpha, one beta and one gamma subunit. Heme c serves as cofactor.

Its subcellular location is the anammoxosome. It catalyses the reaction hydrazine + 3 Fe(III)-[cytochrome c] + H2O = nitric oxide + 3 Fe(II)-[cytochrome c] + NH4(+) + 2 H(+). The protein operates within nitrogen metabolism. Its function is as follows. Component of the hydrazine synthase complex that catalyzes the condensation of nitric oxide (NO) with ammonium to form hydrazine. The gamma subunit catalyzes the first half-reaction, i.e. the three-electron reduction of nitric oxide to hydroxylamine; it may obtain electrons from the triheme cytochrome c kuste2854. Is involved in anaerobic ammonium oxidation (anammox), a biological process in which nitrite is used as the electron acceptor in the conversion of ammonium to dinitrogen gas (N2) and water; this bacterial process has a major role in the Earth's nitrogen cycle and has been estimated to synthesize up to 50% of the dinitrogen gas emitted into our atmosphere from the oceans. The protein is Hydrazine synthase subunit gamma of Kuenenia stuttgartiensis.